The sequence spans 293 residues: Polyamine aminopropyltransferase (293 aa).

Positions 10 to 244 (HIWFTEYHNN…GFWSFTLASK (235 aa)) constitute a PABS domain. Q39 serves as a coordination point for S-methyl-5'-thioadenosine. Spermidine contacts are provided by H70 and D94. Residues E114 and 145–146 (DG) contribute to the S-methyl-5'-thioadenosine site. The active-site Proton acceptor is the D163. 163–166 (DCPD) contributes to the spermidine binding site. Residue P170 coordinates S-methyl-5'-thioadenosine.

The protein belongs to the spermidine/spermine synthase family. As to quaternary structure, homodimer or homotetramer.

It is found in the cytoplasm. It carries out the reaction S-adenosyl 3-(methylsulfanyl)propylamine + putrescine = S-methyl-5'-thioadenosine + spermidine + H(+). The protein operates within amine and polyamine biosynthesis; spermidine biosynthesis; spermidine from putrescine: step 1/1. Its function is as follows. Catalyzes the irreversible transfer of a propylamine group from the amino donor S-adenosylmethioninamine (decarboxy-AdoMet) to putrescine (1,4-diaminobutane) to yield spermidine. The polypeptide is Polyamine aminopropyltransferase (Methanocaldococcus jannaschii (strain ATCC 43067 / DSM 2661 / JAL-1 / JCM 10045 / NBRC 100440) (Methanococcus jannaschii)).